Consider the following 78-residue polypeptide: Ubiquitin-like protein 1 (78 aa).

This sequence belongs to the ubiquitin family.

The protein is Ubiquitin-like protein 1 (ubl1) of Schizosaccharomyces pombe (strain 972 / ATCC 24843) (Fission yeast).